The sequence spans 312 residues: Phosphoribosylaminoimidazole-succinocarboxamide synthase (312 aa).

This sequence belongs to the SAICAR synthetase family.

It carries out the reaction 5-amino-1-(5-phospho-D-ribosyl)imidazole-4-carboxylate + L-aspartate + ATP = (2S)-2-[5-amino-1-(5-phospho-beta-D-ribosyl)imidazole-4-carboxamido]succinate + ADP + phosphate + 2 H(+). The protein operates within purine metabolism; IMP biosynthesis via de novo pathway; 5-amino-1-(5-phospho-D-ribosyl)imidazole-4-carboxamide from 5-amino-1-(5-phospho-D-ribosyl)imidazole-4-carboxylate: step 1/2. The protein is Phosphoribosylaminoimidazole-succinocarboxamide synthase of Legionella pneumophila (strain Paris).